Reading from the N-terminus, the 78-residue chain is Small ribosomal subunit protein bS18 (78 aa).

It belongs to the bacterial ribosomal protein bS18 family. As to quaternary structure, part of the 30S ribosomal subunit. Forms a tight heterodimer with protein bS6.

Functionally, binds as a heterodimer with protein bS6 to the central domain of the 16S rRNA, where it helps stabilize the platform of the 30S subunit. This is Small ribosomal subunit protein bS18 from Acidothermus cellulolyticus (strain ATCC 43068 / DSM 8971 / 11B).